Reading from the N-terminus, the 820-residue chain is Leucine-rich repeat and guanylate kinase domain-containing protein (820 aa).

Residues 72-83 are compositionally biased toward basic and acidic residues; sequence EAEAEQEEKQQE. Positions 72-96 are disordered; the sequence is EAEAEQEEKQQEDGESEESEESEMQ. Acidic residues predominate over residues 84 to 94; it reads DGESEESEESE. LRR repeat units follow at residues 129–149, 150–171, 172–193, 194–215, 216–237, 238–259, 260–280, 281–302, and 303–324; these read YLNL…CGYV, HLQK…SCMP, YLLE…KPPQ, NLKK…SAYH, TLTQ…ENCI, SLTH…GTLP, IKVL…EELK, ALQN…ENHD, and LLEV…EYIE. Residues 337-375 form the LRRCT domain; the sequence is NPIQTKPEYWFFVIYMLLRLTELDQQKIKVEEKVFAVNK. The Guanylate kinase-like domain maps to 414-597; sequence YPMLILTGPA…AYQKLSELIR (184 aa). 421–428 is an ATP binding site; that stretch reads GPAACGKR. The tract at residues 800-820 is disordered; that stretch reads TIMDPGSNTKPTLPPIPHGRR. Over residues 811 to 820 the composition is skewed to pro residues; the sequence is TLPPIPHGRR.

In terms of assembly, interacts (via guanylate kinase-like domain) with RIMBP3 (via coiled-coil region). Interacts (via guanylate kinase-like domain) with HOOK2. Interacts (via LRRCT domain) with KLC3. Interacts with HOOK1 and HOOK3. In terms of tissue distribution, highly expressed in the testis. During spermatid development is initially localized to a supra-nuclear region of round spermatids, and is particularly evident at the leading edge of the developing acrosome and acroplaxome. As maturation proceeded and nuclear elongation initiated, LRGUK moves distally to ultimately reside on the microtubules of the manchette. LRGUK is also evident in the sperm basal body and the sperm tail.

It is found in the cytoplasmic vesicle. Its subcellular location is the secretory vesicle. It localises to the acrosome. The protein resides in the cytoplasm. The protein localises to the cytoskeleton. It is found in the cilium basal body. Its function is as follows. Involved in multiple aspects of sperm assembly including acrosome attachment, shaping of the sperm head and in the early aspects of axoneme development. Not essential for primary cilium biogenesis. This is Leucine-rich repeat and guanylate kinase domain-containing protein (Lrguk) from Mus musculus (Mouse).